Here is a 276-residue protein sequence, read N- to C-terminus: Large ribosomal subunit protein uL2 (276 aa).

The disordered stretch occupies residues 221–276 (RGSAMNPNDHPHGGGEGRAPIGRKSPMTPWGKKARGVKTRDRKKASNALIIRRRTK). Over residues 252–276 (KKARGVKTRDRKKASNALIIRRRTK) the composition is skewed to basic residues.

This sequence belongs to the universal ribosomal protein uL2 family. In terms of assembly, part of the 50S ribosomal subunit. Forms a bridge to the 30S subunit in the 70S ribosome.

Its function is as follows. One of the primary rRNA binding proteins. Required for association of the 30S and 50S subunits to form the 70S ribosome, for tRNA binding and peptide bond formation. It has been suggested to have peptidyltransferase activity; this is somewhat controversial. Makes several contacts with the 16S rRNA in the 70S ribosome. This is Large ribosomal subunit protein uL2 from Onion yellows phytoplasma (strain OY-M).